Here is an 80-residue protein sequence, read N- to C-terminus: Acyl carrier protein (80 aa).

The Carrier domain maps to 4-79; the sequence is DEVKGQVYDI…DAINYIVEKK (76 aa). Residue serine 39 is modified to O-(pantetheine 4'-phosphoryl)serine.

The protein belongs to the acyl carrier protein (ACP) family. In terms of processing, 4'-phosphopantetheine is transferred from CoA to a specific serine of apo-ACP by AcpS. This modification is essential for activity because fatty acids are bound in thioester linkage to the sulfhydryl of the prosthetic group.

The protein resides in the cytoplasm. It functions in the pathway lipid metabolism; fatty acid biosynthesis. In terms of biological role, carrier of the growing fatty acid chain in fatty acid biosynthesis. The chain is Acyl carrier protein from Chloroherpeton thalassium (strain ATCC 35110 / GB-78).